The following is a 153-amino-acid chain: Endoribonuclease YbeY (153 aa).

Residues His-113, His-117, and His-123 each coordinate Zn(2+).

The protein belongs to the endoribonuclease YbeY family. Zn(2+) serves as cofactor.

The protein resides in the cytoplasm. Functionally, single strand-specific metallo-endoribonuclease involved in late-stage 70S ribosome quality control and in maturation of the 3' terminus of the 16S rRNA. The sequence is that of Endoribonuclease YbeY from Aliivibrio fischeri (strain MJ11) (Vibrio fischeri).